The following is a 337-amino-acid chain: Glycerol-3-phosphate dehydrogenase [NAD(P)+] (337 aa).

Positions 11, 12, 32, and 109 each coordinate NADPH. 3 residues coordinate sn-glycerol 3-phosphate: K109, G140, and S142. Residue A144 participates in NADPH binding. K195, D248, S258, R259, and N260 together coordinate sn-glycerol 3-phosphate. Residue K195 is the Proton acceptor of the active site. R259 is a binding site for NADPH. Residues V283 and E285 each coordinate NADPH.

It belongs to the NAD-dependent glycerol-3-phosphate dehydrogenase family.

The protein resides in the cytoplasm. The enzyme catalyses sn-glycerol 3-phosphate + NAD(+) = dihydroxyacetone phosphate + NADH + H(+). The catalysed reaction is sn-glycerol 3-phosphate + NADP(+) = dihydroxyacetone phosphate + NADPH + H(+). The protein operates within membrane lipid metabolism; glycerophospholipid metabolism. Its function is as follows. Catalyzes the reduction of the glycolytic intermediate dihydroxyacetone phosphate (DHAP) to sn-glycerol 3-phosphate (G3P), the key precursor for phospholipid synthesis. In Limosilactobacillus fermentum (strain NBRC 3956 / LMG 18251) (Lactobacillus fermentum), this protein is Glycerol-3-phosphate dehydrogenase [NAD(P)+].